The sequence spans 245 residues: Carbohydrate deacetylase (245 aa).

Mg(2+) contacts are provided by His61 and His122.

It belongs to the YdjC deacetylase family. Mg(2+) is required as a cofactor.

Its function is as follows. Probably catalyzes the deacetylation of acetylated carbohydrates an important step in the degradation of oligosaccharides. This is Carbohydrate deacetylase (celC) from Geobacillus stearothermophilus (Bacillus stearothermophilus).